The chain runs to 303 residues: MIKQRTIKKEVKARGVGIHSGSVVNMTLIPAKEDHGVVFRRMDVGGKLVRAHSAFVNEVVLSTGLENQGVKVSTVEHLMSTFSALGIDNVLVELDSFEVPIMDGSSAPFIFLVQSAGIKEQDAYKKFFVIKDTIRVENGDSWAQVSKYEGFKVSLEIDFDHKKVKESGQKLSINFSKQCYLKEISRARTFGYMKDVEMMQRQNLALGASMDNAIALSDDDVLNEDGMRYQNEFVKHKILDIVGDLYLLGSNLIGHYEGYKTGHLLNNQLLSVILAKPDTWSIETFEEEGSPIQFYSEDWKNSL.

Residues His-77, His-236, and Asp-240 each coordinate Zn(2+). Catalysis depends on His-263, which acts as the Proton donor.

The protein belongs to the LpxC family. Zn(2+) is required as a cofactor.

It carries out the reaction a UDP-3-O-[(3R)-3-hydroxyacyl]-N-acetyl-alpha-D-glucosamine + H2O = a UDP-3-O-[(3R)-3-hydroxyacyl]-alpha-D-glucosamine + acetate. Its pathway is glycolipid biosynthesis; lipid IV(A) biosynthesis; lipid IV(A) from (3R)-3-hydroxytetradecanoyl-[acyl-carrier-protein] and UDP-N-acetyl-alpha-D-glucosamine: step 2/6. Functionally, catalyzes the hydrolysis of UDP-3-O-myristoyl-N-acetylglucosamine to form UDP-3-O-myristoylglucosamine and acetate, the committed step in lipid A biosynthesis. This chain is UDP-3-O-acyl-N-acetylglucosamine deacetylase, found in Ruthia magnifica subsp. Calyptogena magnifica.